The primary structure comprises 98 residues: Lipolysis-activating peptide 1-alpha chain (98 aa).

A signal peptide spans 1 to 22 (MMKLVLFGIIVILFSMIGSIHG). An LCN-type CS-alpha/beta domain is found at 26 to 89 (PGNYPLNTYG…IWDAVKRHCK (64 aa)). 3 cysteine pairs are disulfide-bonded: Cys-40/Cys-63, Cys-49/Cys-68, and Cys-53/Cys-70. Lys-96 carries the post-translational modification Lysine amide.

This sequence belongs to the long (3 C-C) scorpion toxin superfamily. In terms of assembly, monomer (edited version) and heterodimer (non-edited version) of this alpha chain and a beta chain (AC B8XGZ8). Expressed by the venom gland.

It is found in the secreted. Its function is as follows. The heterodimer non-edited LVP1 induces lipolysis in rat adipocytes. Induction of lipolysis by LVP1 appears to be mediated through the beta-2 adrenergic receptor pathway (ADRB2). In terms of biological role, the edited BmKBTx-like, similar to beta-toxins, may modulate voltage-gated sodium channels (Nav) and may block voltage-gated potassium channels (Kv). The polypeptide is Lipolysis-activating peptide 1-alpha chain (Buthus israelis (Israeli scorpion)).